Here is a 235-residue protein sequence, read N- to C-terminus: Large ribosomal subunit protein uL1 (235 aa).

The protein belongs to the universal ribosomal protein uL1 family. As to quaternary structure, part of the 50S ribosomal subunit.

In terms of biological role, binds directly to 23S rRNA. The L1 stalk is quite mobile in the ribosome, and is involved in E site tRNA release. Its function is as follows. Protein L1 is also a translational repressor protein, it controls the translation of the L11 operon by binding to its mRNA. In Methylibium petroleiphilum (strain ATCC BAA-1232 / LMG 22953 / PM1), this protein is Large ribosomal subunit protein uL1.